Reading from the N-terminus, the 292-residue chain is D-tagatose-1,6-bisphosphate aldolase subunit KbaY (292 aa).

Asp-82 (proton donor) is an active-site residue. Residues His-83 and His-180 each contribute to the Zn(2+) site. Gly-181 contributes to the dihydroxyacetone phosphate binding site. His-208 provides a ligand contact to Zn(2+). Residues 209-211 and 230-233 each bind dihydroxyacetone phosphate; these read GAS and NVAT.

It belongs to the class II fructose-bisphosphate aldolase family. TagBP aldolase KbaY subfamily. In terms of assembly, homotetramer. Forms a complex with KbaZ. Requires Zn(2+) as cofactor.

It carries out the reaction D-tagatofuranose 1,6-bisphosphate = D-glyceraldehyde 3-phosphate + dihydroxyacetone phosphate. It functions in the pathway carbohydrate metabolism; D-tagatose 6-phosphate degradation; D-glyceraldehyde 3-phosphate and glycerone phosphate from D-tagatose 6-phosphate: step 2/2. Its function is as follows. Catalytic subunit of the tagatose-1,6-bisphosphate aldolase KbaYZ, which catalyzes the reversible aldol condensation of dihydroxyacetone phosphate (DHAP or glycerone-phosphate) with glyceraldehyde 3-phosphate (G3P) to produce tagatose 1,6-bisphosphate (TBP). Requires KbaZ subunit for full activity and stability. This chain is D-tagatose-1,6-bisphosphate aldolase subunit KbaY, found in Enterobacter sp. (strain 638).